We begin with the raw amino-acid sequence, 246 residues long: UPF0736 protein Aflv_2136 (246 aa).

This sequence belongs to the UPF0736 family.

In Anoxybacillus flavithermus (strain DSM 21510 / WK1), this protein is UPF0736 protein Aflv_2136.